A 226-amino-acid polypeptide reads, in one-letter code: 7-cyano-7-deazaguanine synthase (226 aa).

An ATP-binding site is contributed by 9–19 (YSGGLDSTTCL). Zn(2+) contacts are provided by Cys-189, Cys-199, Cys-202, and Cys-205.

This sequence belongs to the QueC family. It depends on Zn(2+) as a cofactor.

It carries out the reaction 7-carboxy-7-deazaguanine + NH4(+) + ATP = 7-cyano-7-deazaguanine + ADP + phosphate + H2O + H(+). It participates in purine metabolism; 7-cyano-7-deazaguanine biosynthesis. In terms of biological role, catalyzes the ATP-dependent conversion of 7-carboxy-7-deazaguanine (CDG) to 7-cyano-7-deazaguanine (preQ(0)). The sequence is that of 7-cyano-7-deazaguanine synthase from Pelobacter propionicus (strain DSM 2379 / NBRC 103807 / OttBd1).